The following is a 221-amino-acid chain: MSETAPAAPAAPAPVEKTPVKKKAKKTGAAAGKRKASGPPVSELITKAVAASKERSGVSLAALKKALAAAGYDVEKNNSRIKLGLKSLVSKGTLVQTKGTGASGSFKLNKKAASGEAKPKAKKAGAAKAKKPAGAAKKPKKATGAATPKKTAKKTPKKAKKPAAAAGAKKVSKSPKKVKAAKPKKAAKSPAKAKAPKAKASKPKASKPKATKAKKAAPRKK.

Residues 1–17 (MSETAPAAPAAPAPVEK) are compositionally biased toward low complexity. The tract at residues 1–42 (MSETAPAAPAAPAPVEKTPVKKKAKKTGAAAGKRKASGPPVS) is disordered. An N-acetylserine modification is found at S2. S2 is subject to Phosphoserine. K17 is subject to N6-acetyllysine. The residue at position 18 (T18) is a Phosphothreonine. Positions 20–36 (VKKKAKKTGAAAGKRKA) are enriched in basic residues. N6-(beta-hydroxybutyryl)lysine is present on residues K33, K35, and K53. The 74-residue stretch at 37–110 (SGPPVSELIT…GASGSFKLNK (74 aa)) folds into the H15 domain. Residue R55 is modified to Citrulline. K65, K86, and K91 each carry N6-(beta-hydroxybutyryl)lysine. A disordered region spans residues 92-221 (GTLVQTKGTG…KAKKAAPRKK (130 aa)). S105 bears the Phosphoserine; by PKC mark. Residues K107 and K141 each carry the N6-(beta-hydroxybutyryl)lysine modification. Composition is skewed to basic residues over residues 120–141 (KAKK…KPKK), 150–161 (KTAKKTPKKAKK), 170–187 (KVSK…KKAA), and 194–221 (KAPK…PRKK).

The protein belongs to the histone H1/H5 family. In terms of processing, H1 histones are progressively phosphorylated during the cell cycle, becoming maximally phosphorylated during late G2 phase and M phase, and being dephosphorylated sharply thereafter. Post-translationally, hydroxybutyrylation of histones is induced by starvation. Citrullination at Arg-55 (H1R54ci) by PADI4 takes place within the DNA-binding site of H1 and results in its displacement from chromatin and global chromatin decondensation, thereby promoting pluripotency and stem cell maintenance.

The protein resides in the nucleus. The protein localises to the chromosome. In terms of biological role, histone H1 protein binds to linker DNA between nucleosomes forming the macromolecular structure known as the chromatin fiber. Histones H1 are necessary for the condensation of nucleosome chains into higher-order structured fibers. Also acts as a regulator of individual gene transcription through chromatin remodeling, nucleosome spacing and DNA methylation. This chain is Histone H1.3, found in Mus musculus (Mouse).